We begin with the raw amino-acid sequence, 426 residues long: Pregnancy-specific beta-1-glycoprotein 9 (426 aa).

A signal peptide spans 1–34 (MGPLPAPSCTQRITWKGLLLTASLLNFWNPPTTA). The region spanning 35–144 (EVTIEAQPPK…IRHFTFTLYL (110 aa)) is the Ig-like V-type domain. N-linked (GlcNAc...) asparagine glycosylation is found at Asn-104 and Asn-111. Residues 127-129 (RGD) carry the Cell attachment site motif. 3 consecutive Ig-like C2-type domains span residues 147–234 (PKPY…VTLN), 242–326 (PYIT…PVIL), and 335–410 (PRIY…KSMT). Disulfide bonds link Cys-169-Cys-217, Cys-262-Cys-310, and Cys-354-Cys-394. N-linked (GlcNAc...) asparagine glycans are attached at residues Asn-199, Asn-268, Asn-303, and Asn-387.

Belongs to the immunoglobulin superfamily. CEA family. Interacts with latency-associated peptide; leading to TGFB1 activation.

The protein localises to the secreted. Functionally, binds to the small latent transforming growth factor-beta complex, consisting of the N-terminal TGFB1 latency-associated peptide (LAP) and the mature form of TGFB1, thereby leading to the activation of TGFB1. The activation of TGFB1 leads to stimulation of naive CD4(+) T-cells to increase FoxP3 expression and to an increase in the number of FoxP3(+) regulatory T-cells. Induces the differentiation of a suppressive CD4(+)LAP(+)FoxP3(-) T-cell subset. Induces the secretion of TGFB1 in macrophages, but not in activated CD4(+) T-cells. May reduce the expression of several pro-inflammatory cytokines and chemokines by CD4(+) T-cells, including IL2 and IL6. In Homo sapiens (Human), this protein is Pregnancy-specific beta-1-glycoprotein 9 (PSG9).